The chain runs to 397 residues: G2/mitotic-specific cyclin-B2 (397 aa).

2 disordered regions span residues 1–20 and 64–97; these read MALLRRPTVSSDLKNIDTGV and KVTHVNKQPKPTASVKPVQMETLAPKDPPAPEDV. At Thr8 the chain carries Phosphothreonine. Ser11 bears the Phosphoserine mark. Positions 64–74 are enriched in polar residues; that stretch reads KVTHVNKQPKP. 3 positions are modified to phosphoserine: Ser77, Ser98, and Ser391.

It belongs to the cyclin family. Cyclin AB subfamily. As to quaternary structure, interacts with the CDK1 protein kinase to form a serine/threonine kinase holoenzyme complex also known as maturation promoting factor (MPF). The cyclin subunit imparts substrate specificity to the complex.

In terms of biological role, essential for the control of the cell cycle at the G2/M (mitosis) transition. The protein is G2/mitotic-specific cyclin-B2 (CCNB2) of Mesocricetus auratus (Golden hamster).